A 336-amino-acid chain; its full sequence is MLRFIAIVALIATVNAKGGTYGIGVLPSVTYVSGGGGGYPGIYGTYGGGFPGIYGGFGPGGVYGSINSYGGVSTGAYGLYGTSPAVRGAAQGAAAASALGIASGVPSRVSGSSIGIGGGRALVSGSATPIGYYGVPYGGYGYGVPSYGYGYGYPSYGISYGYPGYGYGGYGGYGYPDVAYFGGSTYGNLATGAISSPTSGVTIPYGGALGLYGGYGGYGLGSTYGGYGYGVPSYGYGYGYPSYGISYGYPGYGYGGYGGYGYPDVAHFGGSTYGNLATGAISSPTSGVTIPYGGALGLYGGYGSYGYGPGIYGGGIYGSGGGIYSGGATIIRRKKY.

The N-terminal stretch at methionine 1–alanine 16 is a signal peptide.

Prismatic layer of shell (at protein level). Expressed primarily in the mantle with highest level in the mantle edge and lower level in the mantle pallium.

It is found in the secreted. This chain is Shematrin-like protein 1, found in Pinctada maxima (Silver-lipped pearl oyster).